We begin with the raw amino-acid sequence, 374 residues long: UPF0754 membrane protein SAB1779c (374 aa).

2 consecutive transmembrane segments (helical) span residues 4-24 (LFII…TNVI) and 354-374 (SLGF…AIFV).

The protein belongs to the UPF0754 family.

The protein resides in the cell membrane. In Staphylococcus aureus (strain bovine RF122 / ET3-1), this protein is UPF0754 membrane protein SAB1779c.